The chain runs to 293 residues: Aromatic amino acid exporter YddG (293 aa).

The Cytoplasmic segment spans residues 1–6 (MTSQKA). Residues 7 to 27 (TLIGLVAIVLWSTMVGLIRGV) traverse the membrane as a helical segment. In terms of domain architecture, EamA 1 spans 15 to 137 (VLWSTMVGLI…IALTGVCWVL (123 aa)). The Periplasmic portion of the chain corresponds to 28–33 (SEGLGP). The helical transmembrane segment at 34–54 (VGGAAMIYSLSGLLLIFTVGL) threads the bilayer. At 55-63 (PDIRRFPGR) the chain is on the cytoplasmic side. The chain crosses the membrane as a helical span at residues 64–84 (YLIAGSVLFVSYEICLALSLG). Topologically, residues 85–92 (YAATRHQA) are periplasmic. The chain crosses the membrane as a helical span at residues 93-113 (IEVGMVNYLWPSLTILFAILF). Topologically, residues 114-119 (NGQKTN) are cytoplasmic. Residues 120–140 (WLIVPGLLIALTGVCWVLGGE) traverse the membrane as a helical segment. Residues 141–147 (NGLNPGE) lie on the Periplasmic side of the membrane. A helical transmembrane segment spans residues 148 to 168 (IISNVATSPLSYLLAFLGAFI). The 119-residue stretch at 167 to 285 (FIWATYCTVT…AVMVCVGSLL (119 aa)) folds into the EamA 2 domain. Topologically, residues 169–182 (WATYCTVTNKYARG) are cytoplasmic. Residues 183-203 (FNGITVFVLLTAVALWLHYFL) traverse the membrane as a helical segment. Residues 204–207 (TPQP) are Periplasmic-facing. A helical membrane pass occupies residues 208 to 228 (AMIFSLPVIAKLFTAALTLGF). At 229 to 243 (AYAAWNVGILHGNVT) the chain is on the cytoplasmic side. The chain crosses the membrane as a helical span at residues 244–264 (IMAVGSYFTPVMSSALAALLL). Topologically, residues 265–267 (SSP) are periplasmic. Residues 268–288 (LSFSFWQGAVMVCVGSLLCWL) traverse the membrane as a helical segment. The Cytoplasmic segment spans residues 289–293 (ATRRR).

This sequence belongs to the drug/metabolite transporter (DMT) superfamily. Aromatic amino acid/paraquat exporter (ArAA/P-E) (TC 2.A.7.17) family.

It localises to the cell inner membrane. Functionally, amino acid transporter with broad substrate specificity. Required for resistance to methyl viologen. May function with OmpD porin. This chain is Aromatic amino acid exporter YddG (yddG), found in Salmonella typhimurium (strain 14028s / SGSC 2262).